We begin with the raw amino-acid sequence, 649 residues long: Leucine-rich repeat transmembrane protein FLRT3 (649 aa).

The N-terminal stretch at 1-28 (MISPAWSIFLIGTKIGLFLQVAPLSVMA) is a signal peptide. The 30-residue stretch at 29-58 (KSCPSVCRCDAGFIYCNDRFLTSIPTGIPE) folds into the LRRNT domain. At 29–528 (KSCPSVCRCD…KEPYKNPNLP (500 aa)) the chain is on the extracellular side. 2 disulfide bridges follow: Cys-31–Cys-37 and Cys-35–Cys-44. Residues 38–67 (DAGFIYCNDRFLTSIPTGIPEDATTLYLQN) are interaction with ADGRL3. 10 LRR repeats span residues 59–80 (DATT…SDLK), 84–104 (KVER…NLPK), 105–126 (YVKE…SLSK), 129–150 (YLEE…EGAF), 155–176 (YLRL…LPRT), 177–197 (IEEL…SLQG), 200–220 (SLKR…GDKV), 226–247 (NLTE…LPGT), 248–269 (NLRK…AFSY), and 272–293 (QLYR…IFDD). N-linked (GlcNAc...) asparagine glycosylation is present at Asn-226. Asn-282 and Asn-296 each carry an N-linked (GlcNAc...) asparagine glycan. Residues 305 to 357 (NPWYCGCKMKWVRDWLQSLPVKVNVRGLMCQAPEKVRGMAIKDLNAELFDCKD) form the LRRCT domain. Cys-309 and Cys-334 are disulfide-bonded. The interval 385–407 (VTKQPDIKNPKLTKDHQTTGSPS) is disordered. Residues 389–401 (PDIKNPKLTKDHQ) show a composition bias toward basic and acidic residues. Residues 409–504 (KTITITVKSV…VCIETETAPL (96 aa)) enclose the Fibronectin type-III domain. Residues 529-549 (LAAIIGGAVALVTIALLALVC) form a helical membrane-spanning segment. Topologically, residues 550–649 (WYVHRNGSLF…GIPDSDHSHS (100 aa)) are cytoplasmic. The segment at 622–649 (LYKNNHSESSSNRSYRDSGIPDSDHSHS) is disordered.

In terms of assembly, monomer and homodimer. Self-associates (via leucine-rich repeats), giving rise to homooligomers. Interacts with FGFR1. Interacts (via extracellular domain) with ADGRL1/LPHN1 and LPHN2 (via olfactomedin-like domain). Interacts (via extracellular domain) with ADGRL3 (via olfactomedin-like domain); the interaction is direct. Interacts (via extracellular domain) with UNC5B and UNC5D (via extracellular domain); the interaction is direct. Identified in complexes composed of FLRT3, ADGRL3 and UNC5B, respectively FLRT3, ADGRL3 and UNC5D. May also interact (via extracellular domain) with UNC5A and UNC5C. Interacts (via cytoplasmic domain) with ROBO1. In terms of processing, N-glycosylated. Proteolytic cleavage in the juxtamembrane region gives rise to a soluble ectodomain. Cleavage is probably effected by a metalloprotease.

The protein resides in the cell membrane. It localises to the presynaptic cell membrane. The protein localises to the endoplasmic reticulum membrane. It is found in the cell junction. Its subcellular location is the focal adhesion. The protein resides in the secreted. It localises to the cell projection. The protein localises to the axon. It is found in the growth cone membrane. Functions in cell-cell adhesion, cell migration and axon guidance, exerting an attractive or repulsive role depending on its interaction partners. Plays a role in the spatial organization of brain neurons. Plays a role in vascular development in the retina. Plays a role in cell-cell adhesion via its interaction with ADGRL3 and probably also other latrophilins that are expressed at the surface of adjacent cells. Interaction with the intracellular domain of ROBO1 mediates axon attraction towards cells expressing NTN1. Mediates axon growth cone collapse and plays a repulsive role in neuron guidance via its interaction with UNC5B, and possibly also other UNC-5 family members. Promotes neurite outgrowth (in vitro). Mediates cell-cell contacts that promote an increase both in neurite number and in neurite length. Plays a role in the regulation of the density of glutamaergic synapses. Plays a role in fibroblast growth factor-mediated signaling cascades. Required for normal morphogenesis during embryonic development, but not for normal embryonic patterning. Required for normal ventral closure, headfold fusion and definitive endoderm migration during embryonic development. Required for the formation of a normal basement membrane and the maintenance of a normal anterior visceral endoderm during embryonic development. This chain is Leucine-rich repeat transmembrane protein FLRT3 (FLRT3), found in Pongo abelii (Sumatran orangutan).